We begin with the raw amino-acid sequence, 225 residues long: Imidazoleglycerol-phosphate dehydratase (225 aa).

This sequence belongs to the imidazoleglycerol-phosphate dehydratase family.

The enzyme catalyses D-erythro-1-(imidazol-4-yl)glycerol 3-phosphate = 3-(imidazol-4-yl)-2-oxopropyl phosphate + H2O. It participates in amino-acid biosynthesis; L-histidine biosynthesis; L-histidine from 5-phospho-alpha-D-ribose 1-diphosphate: step 6/9. The sequence is that of Imidazoleglycerol-phosphate dehydratase (PTH3) from Pyricularia oryzae (strain 70-15 / ATCC MYA-4617 / FGSC 8958) (Rice blast fungus).